A 553-amino-acid chain; its full sequence is MGSRSSTRIPVPPMLIIRIVLTLSCIRLTSSLDGRPLAAAGIVVTGDKAVNIYTSSQTGSIIVKLLPNMPKDKEACAKAPLEAYNRTLTTLLTPLGDSIRRKQESVTTSGGRRQRRFIGAIIGSVALGVATAAQITAASALIQANQNAANILRLKESIAATNEAVHEVTDGLSQIAVAVGKMQQFVNDQFNNTAQELDCIKITQQVGVELNLYLTELTTVFGPQITSPALTQLTIQALYNLAGGNMDYLLTKLGVGNNQLSSLIGSGLITGNPILYDSQTQILGIQVTLPSVGNLNNMRATYLETLSVSTTKGFASALVPKVVTQVGSVIEELDTSYCIGTDLDLYCTRIVTFPMSPGIYSCLSGNTSACMYSKTEGALTTPYMALKGSVIANCKMTTCRCADPPGIISQNYGEAVSLIDRHSCNVLSLDGITLRLSGEFDATYQKNISILDSQVIVTGNLDISTELGNVNNSISNALNKLEESNSKLDKVNVRLTSTSALITYIVLTVISLVFGVLSLVLACYLMYKQKAQQKTLLWLGNNTLDQMRATTKI.

The N-terminal stretch at 1–31 is a signal peptide; that stretch reads MGSRSSTRIPVPPMLIIRIVLTLSCIRLTSS. Topologically, residues 32–500 are extracellular; sequence LDGRPLAAAG…VNVRLTSTSA (469 aa). Cystine bridges form between Cys76/Cys199, Cys338/Cys347, Cys362/Cys370, Cys394/Cys399, and Cys401/Cys424. A glycan (N-linked (GlcNAc...) asparagine; by host) is linked at Asn85. Residues 117-141 are fusion peptide; that stretch reads FIGAIIGSVALGVATAAQITAASAL. Residues 142-170 are a coiled coil; sequence IQANQNAANILRLKESIAATNEAVHEVTD. A glycan (N-linked (GlcNAc...) asparagine; by host) is linked at Asn191. A glycan (N-linked (GlcNAc...) asparagine; by host) is linked at Asn366. N-linked (GlcNAc...) asparagine; by host glycans are attached at residues Asn447 and Asn471. A coiled-coil region spans residues 466–491; it reads ELGNVNNSISNALNKLEESNSKLDKV. A helical membrane pass occupies residues 501–521; sequence LITYIVLTVISLVFGVLSLVL. The Cytoplasmic segment spans residues 522–553; it reads ACYLMYKQKAQQKTLLWLGNNTLDQMRATTKI. A lipid anchor (S-palmitoyl cysteine; by host) is attached at Cys523.

This sequence belongs to the paramyxoviruses fusion glycoprotein family. As to quaternary structure, homotrimer of disulfide-linked F1-F2. Post-translationally, the inactive precursor F0 is glycosylated and proteolytically cleaved into F1 and F2 to be functionally active. The cleavage is mediated by cellular proteases during the transport and maturation of the polypeptide.

It localises to the virion membrane. The protein localises to the host cell membrane. Its function is as follows. Class I viral fusion protein. Under the current model, the protein has at least 3 conformational states: pre-fusion native state, pre-hairpin intermediate state, and post-fusion hairpin state. During viral and plasma cell membrane fusion, the heptad repeat (HR) regions assume a trimer-of-hairpins structure, positioning the fusion peptide in close proximity to the C-terminal region of the ectodomain. The formation of this structure appears to drive apposition and subsequent fusion of viral and plasma cell membranes. Directs fusion of viral and cellular membranes leading to delivery of the nucleocapsid into the cytoplasm. This fusion is pH independent and occurs directly at the outer cell membrane. The trimer of F1-F2 (F protein) probably interacts with HN at the virion surface. Upon HN binding to its cellular receptor, the hydrophobic fusion peptide is unmasked and interacts with the cellular membrane, inducing the fusion between cell and virion membranes. Later in infection, F proteins expressed at the plasma membrane of infected cells could mediate fusion with adjacent cells to form syncytia, a cytopathic effect that could lead to tissue necrosis. The chain is Fusion glycoprotein F0 (F) from Newcastle disease virus (strain Her/33) (NDV).